Here is a 187-residue protein sequence, read N- to C-terminus: PBAN-type neuropeptides (187 aa).

Residues 1 to 22 form the signal peptide; sequence MSRFYFFFNLICLYLAIKSALS. A propeptide spanning residues 23 to 64 is cleaved from the precursor; it reads AELDTNDQKYADLRTTGRGESPDSTGPDSDTLRRDDGAEGLN. Positions 34–43 are enriched in basic and acidic residues; the sequence is DLRTTGRGES. Residues 34–58 are disordered; it reads DLRTTGRGESPDSTGPDSDTLRRDD. Leucine amide is present on Leu-76. Residues 80–127 constitute a propeptide that is removed on maturation; it reads TIAADLHDDLVEEFDAEPLGYAGEPPQKLATELVQGAPYMVLLVTAKP. The tract at residues 132-163 is disordered; sequence PIFYHTTSPRLGRRDSVGENHQRPPFAPRLGR. Leu-142 bears the Leucine amide mark. Positions 143 to 153 are enriched in basic and acidic residues; that stretch reads GRRDSVGENHQ. Residues Leu-161 and Leu-171 each carry the leucine amide modification. Positions 174 to 187 are excised as a propeptide; it reads SYNGGYPLPFQFAY.

This sequence belongs to the pyrokinin family.

It localises to the secreted. In terms of biological role, a hormone that controls sex pheromone production in females and pheromone responsiveness in male. Also mediates visceral muscle contractile activity (myotropic activity). This Anopheles gambiae (African malaria mosquito) protein is PBAN-type neuropeptides.